A 459-amino-acid polypeptide reads, in one-letter code: Methylenetetrahydrofolate--tRNA-(uracil-5-)-methyltransferase TrmFO (459 aa).

15–20 is an FAD binding site; it reads GAGLAG.

It belongs to the MnmG family. TrmFO subfamily. FAD serves as cofactor.

The protein localises to the cytoplasm. The catalysed reaction is uridine(54) in tRNA + (6R)-5,10-methylene-5,6,7,8-tetrahydrofolate + NADH + H(+) = 5-methyluridine(54) in tRNA + (6S)-5,6,7,8-tetrahydrofolate + NAD(+). It carries out the reaction uridine(54) in tRNA + (6R)-5,10-methylene-5,6,7,8-tetrahydrofolate + NADPH + H(+) = 5-methyluridine(54) in tRNA + (6S)-5,6,7,8-tetrahydrofolate + NADP(+). Catalyzes the folate-dependent formation of 5-methyl-uridine at position 54 (M-5-U54) in all tRNAs. In Syntrophotalea carbinolica (strain DSM 2380 / NBRC 103641 / GraBd1) (Pelobacter carbinolicus), this protein is Methylenetetrahydrofolate--tRNA-(uracil-5-)-methyltransferase TrmFO.